The sequence spans 100 residues: NADH-quinone oxidoreductase subunit K (100 aa).

The next 3 helical transmembrane spans lie at 4–24 (LFHGLFLSLILFILGLTSLIV), 28–48 (ILFILISLEIMMNAVGLALIV), and 60–80 (IMYIFVITLAASEASIALALL).

The protein belongs to the complex I subunit 4L family. NDH-1 is composed of 13 different subunits. Subunits NuoA, H, J, K, L, M, N constitute the membrane sector of the complex.

It localises to the cell membrane. The catalysed reaction is a quinone + NADH + 5 H(+)(in) = a quinol + NAD(+) + 4 H(+)(out). In terms of biological role, NDH-1 shuttles electrons from NADH, via FMN and iron-sulfur (Fe-S) centers, to quinones in the respiratory chain. The immediate electron acceptor for the enzyme in this species is believed to be ubiquinone. Couples the redox reaction to proton translocation (for every two electrons transferred, four hydrogen ions are translocated across the cytoplasmic membrane), and thus conserves the redox energy in a proton gradient. The polypeptide is NADH-quinone oxidoreductase subunit K (Buchnera aphidicola subsp. Acyrthosiphon pisum (strain 5A)).